A 208-amino-acid polypeptide reads, in one-letter code: Protein-L-isoaspartate O-methyltransferase (208 aa).

The active site involves Ser-59.

Belongs to the methyltransferase superfamily. L-isoaspartyl/D-aspartyl protein methyltransferase family.

The protein resides in the cytoplasm. It carries out the reaction [protein]-L-isoaspartate + S-adenosyl-L-methionine = [protein]-L-isoaspartate alpha-methyl ester + S-adenosyl-L-homocysteine. Catalyzes the methyl esterification of L-isoaspartyl residues in peptides and proteins that result from spontaneous decomposition of normal L-aspartyl and L-asparaginyl residues. It plays a role in the repair and/or degradation of damaged proteins. The sequence is that of Protein-L-isoaspartate O-methyltransferase from Vibrio atlanticus (strain LGP32) (Vibrio splendidus (strain Mel32)).